Consider the following 301-residue polypeptide: Putative S-adenosyl-L-methionine-dependent methyltransferase MT0851 (301 aa).

S-adenosyl-L-methionine-binding positions include aspartate 127 and aspartate 156–leucine 157.

It belongs to the UPF0677 family.

Its function is as follows. Exhibits S-adenosyl-L-methionine-dependent methyltransferase activity. This chain is Putative S-adenosyl-L-methionine-dependent methyltransferase MT0851, found in Mycobacterium tuberculosis (strain CDC 1551 / Oshkosh).